The chain runs to 239 residues: MQAQERIILALDVGSREQALALVKDLAPHVGAFKVGMQLFNSCGPSIVEEINQLGGRVFLDLKFHDIPNTVAAAGRVITRLNCFMFNVHAAGGREMMRQVVEEVKNEAKKLAVAAPLSLAVTVLTSISQEQLEEEIGVKGMKLKDLVVKWALMAKECGISGVVSSPQEIEAIRAACGPEFKIVTPGIRPAWSEKNDQKRITTPGQALQMGADFMVIGRPITQAANPVEAALKIIGELEE.

Substrate-binding positions include aspartate 12, lysine 34, 61-70 (DLKFHDIPNT), threonine 125, arginine 188, glutamine 197, glycine 217, and arginine 218. Lysine 63 (proton donor) is an active-site residue.

Belongs to the OMP decarboxylase family. Type 1 subfamily. Homodimer.

The enzyme catalyses orotidine 5'-phosphate + H(+) = UMP + CO2. The protein operates within pyrimidine metabolism; UMP biosynthesis via de novo pathway; UMP from orotate: step 2/2. Functionally, catalyzes the decarboxylation of orotidine 5'-monophosphate (OMP) to uridine 5'-monophosphate (UMP). The chain is Orotidine 5'-phosphate decarboxylase from Syntrophomonas wolfei subsp. wolfei (strain DSM 2245B / Goettingen).